Consider the following 477-residue polypeptide: Probable periplasmic serine endoprotease DegP-like (477 aa).

Residues 1–27 (MSIPRLKSYLTMFAAVLMLGQVLTAQA) form the signal peptide. Residues His-117, Asp-147, and Ser-220 each act as charge relay system in the active site. Substrate-binding positions include 218-220 (GNS) and 275-279 (LGVVI). PDZ domains follow at residues 264–355 (LKKD…IRNG) and 361–466 (DISV…LRQG).

This sequence belongs to the peptidase S1C family.

The protein localises to the periplasm. The enzyme catalyses Acts on substrates that are at least partially unfolded. The cleavage site P1 residue is normally between a pair of hydrophobic residues, such as Val-|-Val.. Might be efficient in the degradation of transiently denatured and unfolded proteins which accumulate in the periplasm following stress conditions. This chain is Probable periplasmic serine endoprotease DegP-like, found in Pseudomonas putida (strain GB-1).